A 313-amino-acid chain; its full sequence is Protoheme IX farnesyltransferase (313 aa).

9 helical membrane-spanning segments follow: residues 22 to 42 (FALL…VGLM), 46 to 66 (IGVH…GGGA), 98 to 118 (GEAL…LALA), 121 to 141 (VFAG…YTMW), 150 to 170 (IVIG…AATG), 177 to 197 (WLMF…LALF), 223 to 243 (ILVY…TSVG), 246 to 266 (IYLT…VQIW), and 284 to 304 (FFKL…AEAL).

It belongs to the UbiA prenyltransferase family. Protoheme IX farnesyltransferase subfamily. In terms of assembly, interacts with CtaA.

Its subcellular location is the cell inner membrane. It carries out the reaction heme b + (2E,6E)-farnesyl diphosphate + H2O = Fe(II)-heme o + diphosphate. Its pathway is porphyrin-containing compound metabolism; heme O biosynthesis; heme O from protoheme: step 1/1. Its function is as follows. Converts heme B (protoheme IX) to heme O by substitution of the vinyl group on carbon 2 of heme B porphyrin ring with a hydroxyethyl farnesyl side group. This Ruegeria sp. (strain TM1040) (Silicibacter sp.) protein is Protoheme IX farnesyltransferase.